The sequence spans 421 residues: Histidine--tRNA ligase (421 aa).

The protein belongs to the class-II aminoacyl-tRNA synthetase family. In terms of assembly, homodimer.

It localises to the cytoplasm. It carries out the reaction tRNA(His) + L-histidine + ATP = L-histidyl-tRNA(His) + AMP + diphosphate + H(+). This chain is Histidine--tRNA ligase, found in Thermus thermophilus (strain ATCC BAA-163 / DSM 7039 / HB27).